Reading from the N-terminus, the 76-residue chain is MAFLKKSLFLVLFLGLVSLSICEEEKRENKDEIEQEDDEQSEEKRALWKDILKNVGKAAGKAVLNTVTDMVNQGEQ.

Positions 1–22 are cleaved as a signal peptide; it reads MAFLKKSLFLVLFLGLVSLSIC. A propeptide spanning residues 23 to 43 is cleaved from the precursor; that stretch reads EEEKRENKDEIEQEDDEQSEE. The residue at position 73 (Gln-73) is a Glutamine amide. The propeptide occupies 75 to 76; the sequence is EQ.

This sequence belongs to the frog skin active peptide (FSAP) family. Dermaseptin subfamily. Expressed by the skin glands.

The protein localises to the secreted. In terms of biological role, potent antimicrobial peptide with potent activity against Gram-positive and Gram-negative bacteria. Probably acts by disturbing membrane functions with its amphipathic structure. Has an activity of stimulation of insulin release, which may protect the species from being eaten by predators by causing fatal hypoglycemia. Has hemolytic activity. In Phyllomedusa bicolor (Two-colored leaf frog), this protein is Dermaseptin-B4.